Reading from the N-terminus, the 597-residue chain is MALSFFSGGGSASHAKYFDIRLDEDYIVFRGGEQEAASAHLSGKLVLCVSEPISIKHIRLHLTGISRVCWHLPSSSAGGGRKNWRERVFYEKTWKFRDAGKSKTEILPAGNYEYPFDVILEGSMPESVEGLSDTYVTYRFKAEIGRKYAKDIVVRRPLRIIRTLESSALELSHAMSVENIWPNKIEYSISTPTKAVIFGTSIRVDFKLIPLLKGLGIGQIISQLIETHDLTLNPEDPDAIRNTYKTTRTIINDEHTIDEENSLEIIDEAAEGFQFSRTLDLPKTLTRCLQDTDTRGIKVRHKLKFRVQLLNPDGHISELRATLPVSIFISPNLAIDDNNNLVDSSPQTTQRALDDLAQQAPPLYGEHQFDQLYSEVDPSGYRTPGPGSGPGTPFGTLSRNLSAENLASMNAITHTDISASALHHRLVNLDLRGHGRVSASEHDHLGVPSDNGPPSGSNTHGSNTHAPGSPELSRRASDEDVHDNIPSGMATPFIPHSAELETLSRVPSYSTAVRSSVRPHDSDLPDYQAVVAETVHMSAPQSPQQAHIRGSGTGRGSDSYFSAPMDFFHRPAFLHSRSHSHSDDERRIRLTQARGRA.

Disordered stretches follow at residues 375 to 398, 439 to 492, and 576 to 597; these read EVDP…GTLS, ASEH…MATP, and SRSH…RGRA. The span at 452–466 shows a compositional bias: polar residues; that stretch reads GPPSGSNTHGSNTHA. Basic and acidic residues predominate over residues 472 to 483; sequence LSRRASDEDVHD.

Belongs to the arrestin family. Interacts with hulA.

In terms of biological role, component of the regulatory network controlling carbon source utilization through ubiquitination and deubiquitination involving creA, creB, creC, creD and acrB. May be involved in signaling by recognizing appropriately phosphorylated substrates via its arrestin domains and then recruit a HECT-type ubiquitin ligase such as hulA, leading to ubiquitination of the substrate, providing a link between ubiquitination and phosphorylation in protein regulation and stability. This Emericella nidulans (strain FGSC A4 / ATCC 38163 / CBS 112.46 / NRRL 194 / M139) (Aspergillus nidulans) protein is HECT-type ubiquitin ligase-interacting protein creD (creD).